Consider the following 131-residue polypeptide: Spermatocyte protein spe-27 (131 aa).

The first 17 residues, 1–17 (MNKSLIFLLSFAYSCYS), serve as a signal peptide directing secretion.

In terms of biological role, required for spermiogenesis. This chain is Spermatocyte protein spe-27 (spe-27), found in Caenorhabditis elegans.